Reading from the N-terminus, the 285-residue chain is Bifunctional protein FolD (285 aa).

NADP(+) is bound by residues glycine 165–serine 167, serine 190, and isoleucine 231.

It belongs to the tetrahydrofolate dehydrogenase/cyclohydrolase family. Homodimer.

The catalysed reaction is (6R)-5,10-methylene-5,6,7,8-tetrahydrofolate + NADP(+) = (6R)-5,10-methenyltetrahydrofolate + NADPH. It carries out the reaction (6R)-5,10-methenyltetrahydrofolate + H2O = (6R)-10-formyltetrahydrofolate + H(+). It functions in the pathway one-carbon metabolism; tetrahydrofolate interconversion. Functionally, catalyzes the oxidation of 5,10-methylenetetrahydrofolate to 5,10-methenyltetrahydrofolate and then the hydrolysis of 5,10-methenyltetrahydrofolate to 10-formyltetrahydrofolate. The protein is Bifunctional protein FolD of Verminephrobacter eiseniae (strain EF01-2).